A 167-amino-acid chain; its full sequence is UPF0114 protein Tola_1474 (167 aa).

The next 4 helical transmembrane spans lie at 15–35 (IMAP…IKFF), 53–73 (LILI…IVMV), 109–129 (VAAS…MNTE), and 136–156 (IKWY…MGYL).

The protein belongs to the UPF0114 family.

It localises to the cell membrane. This is UPF0114 protein Tola_1474 from Tolumonas auensis (strain DSM 9187 / NBRC 110442 / TA 4).